We begin with the raw amino-acid sequence, 235 residues long: NifU-like protein 2, chloroplastic (235 aa).

The transit peptide at 1–16 (MQLLTLNPAAISRTPP) directs the protein to the chloroplast.

It belongs to the NifU family. In terms of assembly, homodimer; disulfide-linked. [2Fe-2S] cluster serves as cofactor. As to expression, predominantly expressed in leaves and floral stalks. Ubiquitous (at protein level).

It localises to the plastid. It is found in the chloroplast stroma. Its function is as follows. Molecular scaffold for [Fe-S] cluster assembly of chloroplastic iron-sulfur proteins. Required for biogenesis of ferredoxin, a major photosynthetic electron carrier containing [2Fe-2S] cluster. Required for the assembly of photosystem I complex. This chain is NifU-like protein 2, chloroplastic (NIFU2), found in Arabidopsis thaliana (Mouse-ear cress).